Consider the following 500-residue polypeptide: Betaine aldehyde dehydrogenase, chloroplastic (500 aa).

The transit peptide at 1-7 (MSMPIPS) directs the protein to the chloroplast. Residue 238–243 (GSSATG) coordinates NAD(+). The active-site Proton acceptor is the E260. The Nucleophile role is filled by C294.

Belongs to the aldehyde dehydrogenase family. As to quaternary structure, homodimer.

It is found in the plastid. The protein resides in the chloroplast. It carries out the reaction betaine aldehyde + NAD(+) + H2O = glycine betaine + NADH + 2 H(+). Its pathway is amine and polyamine biosynthesis; betaine biosynthesis via choline pathway; betaine from betaine aldehyde: step 1/1. The polypeptide is Betaine aldehyde dehydrogenase, chloroplastic (Beta vulgaris (Sugar beet)).